We begin with the raw amino-acid sequence, 262 residues long: 5'-nucleotidase SurE (262 aa).

A divalent metal cation is bound by residues aspartate 11, aspartate 12, serine 43, and asparagine 101.

This sequence belongs to the SurE nucleotidase family. A divalent metal cation is required as a cofactor.

It is found in the cytoplasm. The catalysed reaction is a ribonucleoside 5'-phosphate + H2O = a ribonucleoside + phosphate. Functionally, nucleotidase that shows phosphatase activity on nucleoside 5'-monophosphates. This Prochlorococcus marinus (strain NATL1A) protein is 5'-nucleotidase SurE.